Reading from the N-terminus, the 471-residue chain is Adenosylhomocysteinase (471 aa).

Substrate contacts are provided by Thr-60, Asp-135, and Glu-196. 197–199 is an NAD(+) binding site; sequence TTT. Residues Lys-226 and Asp-230 each coordinate substrate. Residues Asn-231, 260-265, Glu-283, Asn-318, 339-341, and Asn-387 each bind NAD(+); these read GYGDVG and IGH.

Belongs to the adenosylhomocysteinase family. NAD(+) is required as a cofactor.

Its subcellular location is the cytoplasm. It carries out the reaction S-adenosyl-L-homocysteine + H2O = L-homocysteine + adenosine. It participates in amino-acid biosynthesis; L-homocysteine biosynthesis; L-homocysteine from S-adenosyl-L-homocysteine: step 1/1. Its function is as follows. May play a key role in the regulation of the intracellular concentration of adenosylhomocysteine. This is Adenosylhomocysteinase from Chlorobium phaeovibrioides (strain DSM 265 / 1930) (Prosthecochloris vibrioformis (strain DSM 265)).